The primary structure comprises 63 residues: Large ribosomal subunit protein uL29 (63 aa).

The protein belongs to the universal ribosomal protein uL29 family.

The polypeptide is Large ribosomal subunit protein uL29 (Pseudomonas aeruginosa (strain UCBPP-PA14)).